The following is a 205-amino-acid chain: Holliday junction branch migration complex subunit RuvA (205 aa).

The tract at residues 1-64 (MIGKLKGLID…EDQIKLFGFR (64 aa)) is domain I. Positions 65–143 (SDVEREWFRL…AFADVDPGVI (79 aa)) are domain II. Positions 144–154 (RLSGAIEDSRA) are flexible linker. The tract at residues 154–205 (APQPIADAISALINLGYGQPQAAAAIAAASRAAGDKAETAQLIRLGLKELAK) is domain III.

This sequence belongs to the RuvA family. Homotetramer. Forms an RuvA(8)-RuvB(12)-Holliday junction (HJ) complex. HJ DNA is sandwiched between 2 RuvA tetramers; dsDNA enters through RuvA and exits via RuvB. An RuvB hexamer assembles on each DNA strand where it exits the tetramer. Each RuvB hexamer is contacted by two RuvA subunits (via domain III) on 2 adjacent RuvB subunits; this complex drives branch migration. In the full resolvosome a probable DNA-RuvA(4)-RuvB(12)-RuvC(2) complex forms which resolves the HJ.

The protein localises to the cytoplasm. Its function is as follows. The RuvA-RuvB-RuvC complex processes Holliday junction (HJ) DNA during genetic recombination and DNA repair, while the RuvA-RuvB complex plays an important role in the rescue of blocked DNA replication forks via replication fork reversal (RFR). RuvA specifically binds to HJ cruciform DNA, conferring on it an open structure. The RuvB hexamer acts as an ATP-dependent pump, pulling dsDNA into and through the RuvAB complex. HJ branch migration allows RuvC to scan DNA until it finds its consensus sequence, where it cleaves and resolves the cruciform DNA. This chain is Holliday junction branch migration complex subunit RuvA, found in Bradyrhizobium sp. (strain BTAi1 / ATCC BAA-1182).